The chain runs to 617 residues: Proline--tRNA ligase (617 aa).

The protein belongs to the class-II aminoacyl-tRNA synthetase family. ProS type 1 subfamily. As to quaternary structure, homodimer.

It localises to the cytoplasm. The enzyme catalyses tRNA(Pro) + L-proline + ATP = L-prolyl-tRNA(Pro) + AMP + diphosphate. Catalyzes the attachment of proline to tRNA(Pro) in a two-step reaction: proline is first activated by ATP to form Pro-AMP and then transferred to the acceptor end of tRNA(Pro). As ProRS can inadvertently accommodate and process non-cognate amino acids such as alanine and cysteine, to avoid such errors it has two additional distinct editing activities against alanine. One activity is designated as 'pretransfer' editing and involves the tRNA(Pro)-independent hydrolysis of activated Ala-AMP. The other activity is designated 'posttransfer' editing and involves deacylation of mischarged Ala-tRNA(Pro). The misacylated Cys-tRNA(Pro) is not edited by ProRS. This chain is Proline--tRNA ligase, found in Streptococcus agalactiae serotype Ia (strain ATCC 27591 / A909 / CDC SS700).